Consider the following 304-residue polypeptide: Nucleotide-binding protein RHA1_ro07174 (304 aa).

ATP is bound at residue 24–31; that stretch reads GLSGAGLQ. 75–78 is a GTP binding site; the sequence is DVRS.

Belongs to the RapZ-like family.

Its function is as follows. Displays ATPase and GTPase activities. This is Nucleotide-binding protein RHA1_ro07174 from Rhodococcus jostii (strain RHA1).